A 245-amino-acid polypeptide reads, in one-letter code: Terpene cyclase prhH (245 aa).

7 consecutive transmembrane segments (helical) span residues 17 to 37, 51 to 71, 76 to 96, 113 to 133, 138 to 158, 170 to 190, and 205 to 225; these read ILAI…VNYI, IGIL…WMFP, HWQG…LVTL, IVFI…ALAA, ALGF…CGIA, SYLI…KLCI, and PMCW…PFLY.

This sequence belongs to the paxB family.

It is found in the membrane. Its pathway is secondary metabolite biosynthesis; terpenoid biosynthesis. Terpene cyclase; part of the gene cluster that mediates the biosynthesis of paraherquonin, a meroterpenoid with a unique, highly congested hexacyclic molecular architecture. The first step of the pathway is the synthesis of 3,5-dimethylorsellinic acid (DMOA) by the polyketide synthase prhL. Synthesis of DMOA is followed by farnesylation by the prenyltransferase prhE, methylesterification by the methyl-transferase prhM, epoxidation of the prenyl chain by the flavin-dependent monooxygenase prhF, and cyclization of the farnesyl moiety by the terpene cyclase prhH, to yield the tetracyclic intermediate, protoaustinoid A. The short chain dehydrogenase prhI then oxidizes the C-3 alcohol group of the terpene cyclase product to transform protoaustinoid A into protoaustinoid B. The FAD-binding monooxygenase prhJ catalyzes the oxidation of protoaustinoid B into preaustinoid A which is further oxidized into preaustinoid A1 by FAD-binding monooxygenase phrK. Finally, prhA leads to berkeleydione via the berkeleyone B intermediate. PrhA is a multifunctional dioxygenase that first desaturates at C5-C6 to form berkeleyone B, followed by rearrangement of the A/B-ring to form the cycloheptadiene moiety in berkeleydione. Berkeleydione serves as the key intermediate for the biosynthesis of paraherquonin as well as many other meroterpenoids. The cytochrome P450 monooxygenases prhB, prhD, and prhN, as well as the isomerase prhC, are probably involved in the late stage of paraherquonin biosynthesis, after the production of berkeleydione. Especially prhC might be a multifunctional enzyme that catalyzes the D-ring expansion via intramolecular methoxy rearrangement, as well as the hydrolysis of the expanded D-ring. In Penicillium brasilianum, this protein is Terpene cyclase prhH.